We begin with the raw amino-acid sequence, 367 residues long: Gelsolin-like protein 1 (367 aa).

Positions 1 to 185 (MATGLIKAKE…GQKQQIYVHE (185 aa)) are actin binding. Gelsolin-like repeat units lie at residues 56-141 (NFKV…ELFR) and 179-225 (QQIY…KAMQ). Residues 106 to 109 (DEYG) are actin-actin interfilament contact point. Positions 186–295 (VPLVKERLDH…LKTTEVKRGA (110 aa)) are actin binding, Actin-severing. Positions 235–257 (PKAEAETLEDESTPESHKFYTSL) are disordered. Residues 287-322 (KTTEVKRGAVNSKDFSSNDVFILDTGDQCFVWVGKG) form a Gelsolin-like 3 repeat. Residues 296–366 (VNSKDFSSND…LCKAFNVAIA (71 aa)) are actin-severing, Ca-sensitive.

It belongs to the villin/gelsolin family. Interacts with actin monomers and filaments. Expressed in circular and longitudinal muscle, pseudohearts, pharynx and gizzard. Also expressed in male germ cells at the proximal pole of primary spermatocytes in 16 cell-stage morulae, and in the distal parts of the spermatocytes in 32 and 64 cell-stage morulae. In the spermatids of the 128 cell-stage morulae it is expressed at the proximal pole of the elongated nucleus and the distal pole near the base of the flagellae.

It is found in the cytoplasm. Its subcellular location is the cytoskeleton. Calcium-regulated protein that binds to the plus (or barbed) ends of actin monomers or filaments, preventing monomer exchange (end-blocking or capping). Can promote the assembly of monomers into filaments (nucleation) as well as sever existing filaments. In Lumbricus terrestris (Common earthworm), this protein is Gelsolin-like protein 1.